Consider the following 378-residue polypeptide: P2X receptor A (378 aa).

Over 1–27 (MGFSFDWDDIFQYSTVKIVRIRDRRLG) the chain is Cytoplasmic. A helical transmembrane segment spans residues 28 to 48 (ILHLSFLVGIVAYIVVYSAII). At 49-307 (KKGYLFTEVP…IQTGTIGSFH (259 aa)) the chain is on the lumenal side. Residues 290–303 (RHGIRVIFIQTGTI) are pore-forming motif. Residues 308 to 328 (FQTLLLTLVSGLGLLAVATTV) traverse the membrane as a helical segment. The Cytoplasmic segment spans residues 329–378 (VDQLAIRLLPQRKSYSSLKFQVTESMSNPMKKRITTDEGEDVLYTRIEGL).

It belongs to the P2X receptor family.

Its subcellular location is the contractile vacuole membrane. Functionally, P2X receptors are ATP-gated ion channels that play a role in intracellular calcium signaling. Not required for the purinergic response to extracellular nucleotides. Inward currents evoked by intracellular ATP and ATP analogs. Exclusively selective for ATP over other nucleotides. Insensitive to P2 receptor antagonists PPADS, suramin and 2',3'-O-(2,4,6-trinitrophenyl)-ATP but inhibited by nanomolar concentrations of copper and sodium ion. More permeable to ammonium than either sodium or potassium ions and less permeable to choline. It has been reported that p2xA is not essential for osmoregulation, however this information is in contradiction with another source which indicates that p2xA is required for osmoregulation. Found to be permeable to chloride ions. Inhibited by copper and sodium ions. The protein is P2X receptor A (p2xA) of Dictyostelium discoideum (Social amoeba).